Here is a 150-residue protein sequence, read N- to C-terminus: Large ribosomal subunit protein bL9 (150 aa).

Belongs to the bacterial ribosomal protein bL9 family.

Its function is as follows. Binds to the 23S rRNA. The chain is Large ribosomal subunit protein bL9 from Lactococcus lactis subsp. cremoris (strain MG1363).